Consider the following 106-residue polypeptide: Phosphoribosyl-ATP pyrophosphatase (106 aa).

Belongs to the PRA-PH family.

It is found in the cytoplasm. It catalyses the reaction 1-(5-phospho-beta-D-ribosyl)-ATP + H2O = 1-(5-phospho-beta-D-ribosyl)-5'-AMP + diphosphate + H(+). Its pathway is amino-acid biosynthesis; L-histidine biosynthesis; L-histidine from 5-phospho-alpha-D-ribose 1-diphosphate: step 2/9. The protein is Phosphoribosyl-ATP pyrophosphatase of Geotalea daltonii (strain DSM 22248 / JCM 15807 / FRC-32) (Geobacter daltonii).